Consider the following 231-residue polypeptide: F-box protein SKIP8 (231 aa).

Residues 1–24 (MPSTPLANGGTPPMGGGERTTVTT) form a disordered region. The region spanning 34–80 (VSMMEQLVPEITTHALSYLDYPSLCRLSMTNSLMRKAANDDNAWKAL) is the F-box domain.

As to quaternary structure, part of a SCF (ASK-cullin-F-box) protein ligase complex. Interacts with SKP1A/ASK1.

The protein operates within protein modification; protein ubiquitination. Functionally, component of SCF(ASK-cullin-F-box) E3 ubiquitin ligase complexes, which may mediate the ubiquitination and subsequent proteasomal degradation of target proteins. The sequence is that of F-box protein SKIP8 (SKIP8) from Arabidopsis thaliana (Mouse-ear cress).